The following is a 306-amino-acid chain: D-alanine--D-alanine ligase B (306 aa).

Residues 101–303 enclose the ATP-grasp domain; it reads KLLWQGAGLP…FSQLVVRILE (203 aa). ATP is bound at residue 134–189; the sequence is ISALGLPVIVKPSREGSSVGMSKVVAENALQDALRLAFQHDEEVLIEKWLSGPEFT. Residues Asp257, Glu270, and Asn272 each coordinate Mg(2+).

It belongs to the D-alanine--D-alanine ligase family. Requires Mg(2+) as cofactor. Mn(2+) is required as a cofactor.

It is found in the cytoplasm. The catalysed reaction is 2 D-alanine + ATP = D-alanyl-D-alanine + ADP + phosphate + H(+). It functions in the pathway cell wall biogenesis; peptidoglycan biosynthesis. In terms of biological role, cell wall formation. This is D-alanine--D-alanine ligase B from Shigella flexneri.